Consider the following 322-residue polypeptide: Probable cAMP-dependent protein kinase catalytic subunit (322 aa).

One can recognise a Protein kinase domain in the interval 7 to 261 (FEFVKVVGVG…ICEIMGHPFF (255 aa)). ATP-binding positions include 13-21 (VGVGAFGKV) and lysine 37. Aspartate 132 (proton acceptor) is an active-site residue. Residues 262–322 (KGIDWHEVES…KHLYKVSKGL (61 aa)) form the AGC-kinase C-terminal domain.

It belongs to the protein kinase superfamily. AGC Ser/Thr protein kinase family. cAMP subfamily.

It carries out the reaction L-seryl-[protein] + ATP = O-phospho-L-seryl-[protein] + ADP + H(+). The enzyme catalyses L-threonyl-[protein] + ATP = O-phospho-L-threonyl-[protein] + ADP + H(+). The chain is Probable cAMP-dependent protein kinase catalytic subunit from Encephalitozoon cuniculi (strain GB-M1) (Microsporidian parasite).